The sequence spans 195 residues: Thymidylate kinase (195 aa).

7–14 (GIDGVGKS) serves as a coordination point for ATP.

This sequence belongs to the thymidylate kinase family.

It carries out the reaction dTMP + ATP = dTDP + ADP. Its function is as follows. Phosphorylation of dTMP to form dTDP in both de novo and salvage pathways of dTTP synthesis. The polypeptide is Thymidylate kinase (Campylobacter concisus (strain 13826)).